Reading from the N-terminus, the 796-residue chain is Fibroblast growth factor receptor 3 (796 aa).

Residues 1 to 19 (MLVWLCGLCLVTLAGGRSA) form the signal peptide. Topologically, residues 20 to 358 (ARLPLTEGRP…AEPVPDVDTS (339 aa)) are extracellular. Residues 21-119 (RLPLTEGRPT…VLRNVTVRVT (99 aa)) form the Ig-like C2-type 1 domain. An intrachain disulfide couples C56 to C102. 2 N-linked (GlcNAc...) asparagine glycosylation sites follow: N91 and N113. The tract at residues 117–142 (RVTDSPSSGDDEDDDEESESANAPKF) is disordered. The span at 125-135 (GDDEDDDEESE) shows a compositional bias: acidic residues. Ig-like C2-type domains follow at residues 140 to 233 (PKFT…YTLD) and 239 to 344 (PHRP…AWLT). C165 and C217 are disulfide-bonded. Residues N214, N251, N283, N304, and N317 are each glycosylated (N-linked (GlcNAc...) asparagine). An intrachain disulfide couples C264 to C328. Residues 359–379 (VSILAAAGCVAVVILVVIIIF) form a helical membrane-spanning segment. Residues 380–796 (TYKMKMPSKK…HQQYNGVIRT (417 aa)) lie on the Cytoplasmic side of the membrane. One can recognise a Protein kinase domain in the interval 457–746 (LTLGKPLGEG…LTVTSTDEYL (290 aa)). ATP contacts are provided by residues 463-471 (LGEGCFGQV) and K493. D602 acts as the Proton acceptor in catalysis. Y632, Y633, Y709, and Y745 each carry phosphotyrosine; by autocatalysis.

The protein belongs to the protein kinase superfamily. Tyr protein kinase family. Fibroblast growth factor receptor subfamily. As to quaternary structure, monomer. Homodimer after ligand binding. Post-translationally, autophosphorylated. Binding of FGF family members together with heparan sulfate proteoglycan or heparin promotes receptor dimerization and autophosphorylation on tyrosine residues. Autophosphorylation occurs in trans between the two FGFR molecules present in the dimer. Undetectable in the adult skeletal muscle. Low levels of expression were detected in the liver, lung and kidney. Medium levels of expression were detected in the heart, spleen, intestine and eye. Highest expression is observed in the testis.

The protein localises to the cell membrane. The catalysed reaction is L-tyrosyl-[protein] + ATP = O-phospho-L-tyrosyl-[protein] + ADP + H(+). With respect to regulation, present in an inactive conformation in the absence of bound ligand. Ligand binding leads to dimerization and activation by autophosphorylation on tyrosine residues. Functionally, tyrosine-protein kinase that acts as a cell-surface receptor for fibroblast growth factors and plays an essential role in the regulation of cell proliferation, differentiation and apoptosis. Plays an essential role in the regulation of chondrocyte differentiation, proliferation and apoptosis, and is required for normal skeleton development. Regulates both osteogenesis and postnatal bone mineralization by osteoblasts. Promotes apoptosis in chondrocytes, but can also promote cancer cell proliferation. Phosphorylates PLCG1, CBL and FRS2. Ligand binding leads to the activation of several signaling cascades. Activation of PLCG1 leads to the production of the cellular signaling molecules diacylglycerol and inositol 1,4,5-trisphosphate. Phosphorylation of FRS2 triggers recruitment of GRB2, GAB1, PIK3R1 and SOS1, and mediates activation of RAS, MAPK1/ERK2, MAPK3/ERK1 and the MAP kinase signaling pathway, as well as of the AKT1 signaling pathway. The protein is Fibroblast growth factor receptor 3 (FGFR3) of Pleurodeles waltl (Iberian ribbed newt).